The primary structure comprises 189 residues: Thermostable direct hemolysin 2 (189 aa).

A signal peptide spans 1 to 24 (MKYRYFAKKSFLFISMLAAFKTFA). An intrachain disulfide couples Cys-175 to Cys-185.

This sequence belongs to the TDH hemolysin family. In terms of assembly, homodimer.

Functionally, bacterial hemolysins are exotoxins that attack blood cell membranes and cause cell rupture by mechanisms not clearly defined. This Vibrio parahaemolyticus serotype O3:K6 (strain RIMD 2210633) protein is Thermostable direct hemolysin 2 (tdh2).